Reading from the N-terminus, the 504-residue chain is Cytochrome P450 3A16 (504 aa).

A heme-binding site is contributed by cysteine 443.

Belongs to the cytochrome P450 family. Requires heme as cofactor.

It is found in the endoplasmic reticulum membrane. It localises to the microsome membrane. It carries out the reaction an organic molecule + reduced [NADPH--hemoprotein reductase] + O2 = an alcohol + oxidized [NADPH--hemoprotein reductase] + H2O + H(+). Functionally, cytochromes P450 are a group of heme-thiolate monooxygenases. In liver microsomes, this enzyme is involved in an NADPH-dependent electron transport pathway. It oxidizes a variety of structurally unrelated compounds, including steroids, fatty acids, and xenobiotics. The protein is Cytochrome P450 3A16 (Cyp3a16) of Mus musculus (Mouse).